The sequence spans 156 residues: 17.7 kDa class II heat shock protein (156 aa).

One can recognise a sHSP domain in the interval 39-156 (DAKAMAATPA…KPKTIQVQVA (118 aa)).

This sequence belongs to the small heat shock protein (HSP20) family. May form oligomeric structures.

The protein localises to the cytoplasm. This chain is 17.7 kDa class II heat shock protein (HSP17.7), found in Arabidopsis thaliana (Mouse-ear cress).